We begin with the raw amino-acid sequence, 568 residues long: Fumarate hydratase 2 (568 aa).

Cys-133 lines the [4Fe-4S] cluster pocket. Residues 134–135 (QD), Arg-173, Gly-216, and 219–225 (NKAYLYQ) contribute to the (S)-malate site. The [4Fe-4S] cluster site is built by Cys-252 and Cys-346. Residues Arg-421, 467-471 (TTAGR), and Lys-491 contribute to the (S)-malate site.

Belongs to the class-I fumarase family. Homodimer. It depends on [4Fe-4S] cluster as a cofactor.

It is found in the cytoplasm. It localises to the cytosol. It catalyses the reaction (S)-malate = fumarate + H2O. Its activity is regulated as follows. Specifically and competitively inhibited by 2-thiomalate, which coordinates with the catalytic [4Fe-4S] cluster. Weakly inhibited by malonate. Functionally, cytosolic fumarate hydratase that catalyzes the reversible hydration of fumarate to (S)-malate. The sequence is that of Fumarate hydratase 2 from Leishmania major.